The primary structure comprises 278 residues: NAD kinase (278 aa).

D56 (proton acceptor) is an active-site residue. Residues 56–57, 132–133, R158, D160, and 171–176 contribute to the NAD(+) site; these read DG, NE, and TAYNKS.

The protein belongs to the NAD kinase family. It depends on a divalent metal cation as a cofactor.

It is found in the cytoplasm. The enzyme catalyses NAD(+) + ATP = ADP + NADP(+) + H(+). Involved in the regulation of the intracellular balance of NAD and NADP, and is a key enzyme in the biosynthesis of NADP. Catalyzes specifically the phosphorylation on 2'-hydroxyl of the adenosine moiety of NAD to yield NADP. The sequence is that of NAD kinase from Streptococcus pyogenes serotype M1.